Here is a 183-residue protein sequence, read N- to C-terminus: ATP-dependent protease subunit HslV (183 aa).

Residue T7 is part of the active site. Residues G162, C165, and T168 each coordinate Na(+).

It belongs to the peptidase T1B family. HslV subfamily. A double ring-shaped homohexamer of HslV is capped on each side by a ring-shaped HslU homohexamer. The assembly of the HslU/HslV complex is dependent on binding of ATP.

Its subcellular location is the cytoplasm. The enzyme catalyses ATP-dependent cleavage of peptide bonds with broad specificity.. Allosterically activated by HslU binding. Functionally, protease subunit of a proteasome-like degradation complex believed to be a general protein degrading machinery. This is ATP-dependent protease subunit HslV from Alkalilimnicola ehrlichii (strain ATCC BAA-1101 / DSM 17681 / MLHE-1).